We begin with the raw amino-acid sequence, 472 residues long: 3-isopropylmalate dehydratase large subunit (472 aa).

Cysteine 350, cysteine 411, and cysteine 414 together coordinate [4Fe-4S] cluster.

This sequence belongs to the aconitase/IPM isomerase family. LeuC type 1 subfamily. As to quaternary structure, heterodimer of LeuC and LeuD. The cofactor is [4Fe-4S] cluster.

The enzyme catalyses (2R,3S)-3-isopropylmalate = (2S)-2-isopropylmalate. It functions in the pathway amino-acid biosynthesis; L-leucine biosynthesis; L-leucine from 3-methyl-2-oxobutanoate: step 2/4. Functionally, catalyzes the isomerization between 2-isopropylmalate and 3-isopropylmalate, via the formation of 2-isopropylmaleate. The polypeptide is 3-isopropylmalate dehydratase large subunit (Alcanivorax borkumensis (strain ATCC 700651 / DSM 11573 / NCIMB 13689 / SK2)).